Consider the following 277-residue polypeptide: Ribosomal RNA small subunit methyltransferase A (277 aa).

Residues asparagine 23, leucine 25, glycine 50, glutamate 75, aspartate 98, and asparagine 121 each coordinate S-adenosyl-L-methionine.

It belongs to the class I-like SAM-binding methyltransferase superfamily. rRNA adenine N(6)-methyltransferase family. RsmA subfamily.

It is found in the cytoplasm. The enzyme catalyses adenosine(1518)/adenosine(1519) in 16S rRNA + 4 S-adenosyl-L-methionine = N(6)-dimethyladenosine(1518)/N(6)-dimethyladenosine(1519) in 16S rRNA + 4 S-adenosyl-L-homocysteine + 4 H(+). Specifically dimethylates two adjacent adenosines (A1518 and A1519) in the loop of a conserved hairpin near the 3'-end of 16S rRNA in the 30S particle. May play a critical role in biogenesis of 30S subunits. The chain is Ribosomal RNA small subunit methyltransferase A from Paraburkholderia xenovorans (strain LB400).